A 519-amino-acid chain; its full sequence is bZIP transcription factor 30 (519 aa).

Disordered regions lie at residues 1–30 (MGGG…IPKH), 45–83 (FRHP…QPSS), 108–202 (TGAG…RKPE), 222–295 (VLNS…TGRH), and 315–339 (SSLK…NSSA). Positions 51 to 61 (GAPPPPIPPIS) are enriched in pro residues. Polar residues predominate over residues 149–173 (SDVTFGFSSMMSQNQKSPPLSSLER). Residues 187–202 (VKKEPREGFYKGRKPE) are compositionally biased toward basic and acidic residues. Low complexity-rich tracts occupy residues 244–268 (SRGS…SASG) and 317–329 (LKLP…KVSP). Over residues 330 to 339 (TNSGEGNSSA) the composition is skewed to polar residues. Residues 372–393 (KRVKRILANRVSAARSKERKTR) are basic motif. The stretch at 386 to 460 (RSKERKTRYM…SEKLNEEVQR (75 aa)) forms a coiled coil. The segment at 398–433 (LEHKVQTLQTEATTLSAQLTHLQRDSMGLTNQNSEL) is leucine-zipper. The segment at 465–519 (IGEPNRRQSGSSSSESKMSLNPEMFQQLSISQLQHQQMQHSNQCSTMKAKHTSND) is disordered. Composition is skewed to low complexity over residues 473-483 (SGSSSSESKMS) and 490-509 (QQLS…NQCS).

Interacts with WUS, HEC1, KNAT1, KNAT2, HAT1, BEL1, and NGA1. Expressed in inflorescence meristem, floral organ primordia, gynoecia, ovules and carpel margin meristem.

The protein resides in the nucleus. Transcription factor that acts as a repressor of reproductive development, meristem size and plant growth. Acts as a transcriptional repressor in inflorescence tissues. Interacts with well known regulators of meristem and gynoecium development such as WUS, HEC1, KNAT1, KNAT2, HAT1, BEL1 and NGA1. Acts as a positive regulator of JAG and OFP1 expression in developing gynoecia. The chain is bZIP transcription factor 30 from Arabidopsis thaliana (Mouse-ear cress).